The primary structure comprises 125 residues: Small ribosomal subunit protein uS12 (125 aa).

The disordered stretch occupies residues Arg9–Arg31. Residue Asp89 is modified to 3-methylthioaspartic acid. Residues Gly106–Ala125 form a disordered region. A compositionally biased stretch (basic residues) spans Ser113–Ala125.

This sequence belongs to the universal ribosomal protein uS12 family. In terms of assembly, part of the 30S ribosomal subunit. Contacts proteins S8 and S17. May interact with IF1 in the 30S initiation complex.

With S4 and S5 plays an important role in translational accuracy. In terms of biological role, interacts with and stabilizes bases of the 16S rRNA that are involved in tRNA selection in the A site and with the mRNA backbone. Located at the interface of the 30S and 50S subunits, it traverses the body of the 30S subunit contacting proteins on the other side and probably holding the rRNA structure together. The combined cluster of proteins S8, S12 and S17 appears to hold together the shoulder and platform of the 30S subunit. This is Small ribosomal subunit protein uS12 from Polaromonas sp. (strain JS666 / ATCC BAA-500).